A 363-amino-acid polypeptide reads, in one-letter code: 3-dehydroquinate synthase (363 aa).

NAD(+) contacts are provided by residues 134–135 (TT), K147, and K156. Zn(2+)-binding residues include E189, H254, and H271.

Belongs to the sugar phosphate cyclases superfamily. Dehydroquinate synthase family. Requires Co(2+) as cofactor. Zn(2+) serves as cofactor. It depends on NAD(+) as a cofactor.

The protein localises to the cytoplasm. It carries out the reaction 7-phospho-2-dehydro-3-deoxy-D-arabino-heptonate = 3-dehydroquinate + phosphate. It participates in metabolic intermediate biosynthesis; chorismate biosynthesis; chorismate from D-erythrose 4-phosphate and phosphoenolpyruvate: step 2/7. Its function is as follows. Catalyzes the conversion of 3-deoxy-D-arabino-heptulosonate 7-phosphate (DAHP) to dehydroquinate (DHQ). This chain is 3-dehydroquinate synthase, found in Prochlorococcus marinus (strain MIT 9312).